Reading from the N-terminus, the 138-residue chain is MNQLLREVLTPDAERTQNFTVGDTVKVHYKIVESGKERVQIYEGVVISVANEANGKTFTVRRVSYDVGVERIFPLFSPKIAKIELIRKGKVRRAKLYYLRNLAGKAARIKELKGGKALVSEDRKRQQAAAATKSTTTE.

This sequence belongs to the bacterial ribosomal protein bL19 family.

Functionally, this protein is located at the 30S-50S ribosomal subunit interface and may play a role in the structure and function of the aminoacyl-tRNA binding site. This Leptospira interrogans serogroup Icterohaemorrhagiae serovar copenhageni (strain Fiocruz L1-130) protein is Large ribosomal subunit protein bL19.